Here is a 209-residue protein sequence, read N- to C-terminus: Chloramphenicol acetyltransferase (209 aa).

The active-site Proton acceptor is His-189.

It belongs to the chloramphenicol acetyltransferase family. As to quaternary structure, homotrimer.

It catalyses the reaction chloramphenicol + acetyl-CoA = chloramphenicol 3-acetate + CoA. Functionally, this enzyme is an effector of chloramphenicol resistance in bacteria. In Staphylococcus aureus, this protein is Chloramphenicol acetyltransferase.